The following is a 442-amino-acid chain: tRNA-2-methylthio-N(6)-dimethylallyladenosine synthase (442 aa).

The region spanning 5–122 is the MTTase N-terminal domain; the sequence is KKVFIKTLGC…LPEMIKQKQK (118 aa). C14, C51, C85, C159, C163, and C166 together coordinate [4Fe-4S] cluster. Residues 145 to 378 enclose the Radical SAM core domain; it reads KAEGAKAYVS…DLLNSNAQII (234 aa). The TRAM domain maps to 380 to 442; sequence RQMVGTNQRI…LPNSLRGELI (63 aa).

This sequence belongs to the methylthiotransferase family. MiaB subfamily. Monomer. [4Fe-4S] cluster is required as a cofactor.

It localises to the cytoplasm. It catalyses the reaction N(6)-dimethylallyladenosine(37) in tRNA + (sulfur carrier)-SH + AH2 + 2 S-adenosyl-L-methionine = 2-methylsulfanyl-N(6)-dimethylallyladenosine(37) in tRNA + (sulfur carrier)-H + 5'-deoxyadenosine + L-methionine + A + S-adenosyl-L-homocysteine + 2 H(+). Catalyzes the methylthiolation of N6-(dimethylallyl)adenosine (i(6)A), leading to the formation of 2-methylthio-N6-(dimethylallyl)adenosine (ms(2)i(6)A) at position 37 in tRNAs that read codons beginning with uridine. This is tRNA-2-methylthio-N(6)-dimethylallyladenosine synthase from Francisella tularensis subsp. holarctica (strain FTNF002-00 / FTA).